Consider the following 480-residue polypeptide: MIMRQTKLYPVVMAGGSGSRLWPLSRVLYPKQFLCLKGDLTMLQTTICRLNGVECESPLVICNEQHRFIVAEQLRQLNKLTENIILEPAGRNTAPAIALAALAATRQHTDCDPLMLVLAADHAIANEEAFRDAVRGAMPYADAGKLVTFGIVPDLPETGYGYIRRGDVVPGATDAVAFEVAQFVEKPGLETAQAYVASGDYYWNSGMFLFRAGRYLEELKKFRPDILAACEQAMRGVDPDLDFIRVDEEAFLACPEESIDYAVMERTADAVVMPMDAGWSDVGSWSSLWEISAHTPEGNVHHGDVISHKTENSYVYAESGLVTTVGVKDLVVVQTKDAVLIADRHAVQDVKKVVEKIKADGRHEHHMHREVYRPWGKYDSIDAGERYQVKRITVKPGEGLSVQMHHHRAEHWVVVAGTARVTINGEVKLLGENESIYIPLGATHCLENPGKIPLDLIEVRSGSYLEEDDVVRFEDRYGRV.

Belongs to the mannose-6-phosphate isomerase type 2 family.

It catalyses the reaction alpha-D-mannose 1-phosphate + GTP + H(+) = GDP-alpha-D-mannose + diphosphate. Its pathway is nucleotide-sugar biosynthesis; GDP-alpha-D-mannose biosynthesis; GDP-alpha-D-mannose from alpha-D-mannose 1-phosphate (GTP route): step 1/1. Functionally, involved in the biosynthesis of the capsular polysaccharide colanic acid. This Salmonella typhimurium (strain LT2 / SGSC1412 / ATCC 700720) protein is Mannose-1-phosphate guanylyltransferase ManC (manC).